The chain runs to 270 residues: uncharacterized protein (270 aa).

In terms of biological role, possibly involved in pGI2 replication mechanism. This is an uncharacterized protein from Bacillus thuringiensis.